Reading from the N-terminus, the 226-residue chain is ATP synthase F(0) complex subunit a (226 aa).

Helical transmembrane passes span 12-32, 68-88, 97-117, 138-158, 164-184, and 200-222; these read PTMM…ILFP, WALM…LGLL, QLSM…ITGF, IPML…ALAV, ITAG…LMNI, and TILE…SLYL.

The protein belongs to the ATPase A chain family. Component of the ATP synthase complex composed at least of ATP5F1A/subunit alpha, ATP5F1B/subunit beta, ATP5MC1/subunit c (homooctomer), MT-ATP6/subunit a, MT-ATP8/subunit 8, ATP5ME/subunit e, ATP5MF/subunit f, ATP5MG/subunit g, ATP5MK/subunit k, ATP5MJ/subunit j, ATP5F1C/subunit gamma, ATP5F1D/subunit delta, ATP5F1E/subunit epsilon, ATP5PF/subunit F6, ATP5PB/subunit b, ATP5PD/subunit d, ATP5PO/subunit OSCP. ATP synthase complex consists of a soluble F(1) head domain (subunits alpha(3) and beta(3)) - the catalytic core - and a membrane F(0) domain - the membrane proton channel (subunits c, a, 8, e, f, g, k and j). These two domains are linked by a central stalk (subunits gamma, delta, and epsilon) rotating inside the F1 region and a stationary peripheral stalk (subunits F6, b, d, and OSCP). Interacts with DNAJC30; interaction is direct.

It is found in the mitochondrion inner membrane. It catalyses the reaction H(+)(in) = H(+)(out). Subunit a, of the mitochondrial membrane ATP synthase complex (F(1)F(0) ATP synthase or Complex V) that produces ATP from ADP in the presence of a proton gradient across the membrane which is generated by electron transport complexes of the respiratory chain. ATP synthase complex consist of a soluble F(1) head domain - the catalytic core - and a membrane F(1) domain - the membrane proton channel. These two domains are linked by a central stalk rotating inside the F(1) region and a stationary peripheral stalk. During catalysis, ATP synthesis in the catalytic domain of F(1) is coupled via a rotary mechanism of the central stalk subunits to proton translocation. With the subunit c (ATP5MC1), forms the proton-conducting channel in the F(0) domain, that contains two crucial half-channels (inlet and outlet) that facilitate proton movement from the mitochondrial intermembrane space (IMS) into the matrix. Protons are taken up via the inlet half-channel and released through the outlet half-channel, following a Grotthuss mechanism. This Felis catus (Cat) protein is ATP synthase F(0) complex subunit a.